Reading from the N-terminus, the 231-residue chain is Protein crossbronx homolog (231 aa).

The region spanning leucine 14–alanine 168 is the UBC core domain.

Belongs to the ubiquitin-conjugating enzyme family. FTS subfamily.

The sequence is that of Protein crossbronx homolog from Culex quinquefasciatus (Southern house mosquito).